A 235-amino-acid chain; its full sequence is MAKDTTGRMRVTVKSAGRMKLSSKLWLERQLNDPYVAQAKRDGYRSRAAYKLLEIDDKYHFLKSGLAVADLGAAPGGWSQIAAKRVGAPDGRGKVIAIDLLEMGEIPGVTFAQLDFLDDAAPDRLREMLGGGADVVMSDMAANTTGHRKTDQLRIVGLVESAAQFASEVLKPGGTFVAKVFQSGADATLMTQLKRDFATVKHVKPAASRKDSSERYVLAMGFRGVPIVAPETVDE.

S-adenosyl-L-methionine contacts are provided by glycine 76, tryptophan 78, aspartate 99, aspartate 115, and aspartate 139. Lysine 179 functions as the Proton acceptor in the catalytic mechanism.

The protein belongs to the class I-like SAM-binding methyltransferase superfamily. RNA methyltransferase RlmE family.

The protein localises to the cytoplasm. The catalysed reaction is uridine(2552) in 23S rRNA + S-adenosyl-L-methionine = 2'-O-methyluridine(2552) in 23S rRNA + S-adenosyl-L-homocysteine + H(+). Functionally, specifically methylates the uridine in position 2552 of 23S rRNA at the 2'-O position of the ribose in the fully assembled 50S ribosomal subunit. The polypeptide is Ribosomal RNA large subunit methyltransferase E (Rhodopseudomonas palustris (strain BisB5)).